Consider the following 298-residue polypeptide: Glutamyl-Q tRNA(Asp) synthetase (298 aa).

Residues 8–12 and glutamate 44 contribute to the L-glutamate site; that span reads RFAPS. Residues 11 to 21 carry the 'HIGH' region motif; it reads PSPTGPLHFGS. 4 residues coordinate Zn(2+): cysteine 100, cysteine 102, tyrosine 123, and cysteine 127. L-glutamate contacts are provided by tyrosine 183 and arginine 201. The 'KMSKS' region motif lies at 239 to 243; that stretch reads KLSKQ. Lysine 242 is a binding site for ATP.

Belongs to the class-I aminoacyl-tRNA synthetase family. GluQ subfamily. The cofactor is Zn(2+).

In terms of biological role, catalyzes the tRNA-independent activation of glutamate in presence of ATP and the subsequent transfer of glutamate onto a tRNA(Asp). Glutamate is transferred on the 2-amino-5-(4,5-dihydroxy-2-cyclopenten-1-yl) moiety of the queuosine in the wobble position of the QUC anticodon. The polypeptide is Glutamyl-Q tRNA(Asp) synthetase (Burkholderia cenocepacia (strain ATCC BAA-245 / DSM 16553 / LMG 16656 / NCTC 13227 / J2315 / CF5610) (Burkholderia cepacia (strain J2315))).